The following is a 366-amino-acid chain: Pectinesterase A (366 aa).

The first 24 residues, 1-24, serve as a signal peptide directing secretion; sequence MLKTISGTLALSLIIAASVHQAQA. 2 residues coordinate substrate: Thr109 and Gln153. Asp178 serves as the catalytic Proton donor. Cys192 and Cys212 are disulfide-bonded. The active-site Nucleophile is Asp199. Substrate contacts are provided by Arg219, Asn226, Tyr230, Arg267, Trp269, and Thr272.

This sequence belongs to the pectinesterase family. As to quaternary structure, monomer.

Its subcellular location is the secreted. The enzyme catalyses [(1-&gt;4)-alpha-D-galacturonosyl methyl ester](n) + n H2O = [(1-&gt;4)-alpha-D-galacturonosyl](n) + n methanol + n H(+). It participates in glycan metabolism; pectin degradation; 2-dehydro-3-deoxy-D-gluconate from pectin: step 1/5. Its function is as follows. Involved in maceration and soft-rotting of plant tissue. In Dickeya chrysanthemi (Pectobacterium chrysanthemi), this protein is Pectinesterase A (pemA).